The chain runs to 678 residues: Dol-P-Man:Man(7)GlcNAc(2)-PP-Dol alpha-1,6-mannosyltransferase (678 aa).

11 consecutive transmembrane segments (helical) span residues 1–21, 56–76, 81–101, 109–129, 133–153, 168–188, 200–220, 252–272, 279–299, 301–321, and 334–354; these read MDIL…FTKV, FIGP…FETL, FWAQ…AWNS, IYGV…FHFM, TRPL…AYWL, ILVF…VSLL, VALP…SFFW, FYSA…IGVA, PLVL…HKEL, FIIY…QRIW, and ALAC…LLVI.

It belongs to the glycosyltransferase 22 family.

The protein resides in the endoplasmic reticulum membrane. The catalysed reaction is an alpha-D-Man-(1-&gt;2)-alpha-D-Man-(1-&gt;2)-alpha-D-Man-(1-&gt;3)-[alpha-D-Man-(1-&gt;2)-alpha-D-Man-(1-&gt;3)-alpha-D-Man-(1-&gt;6)]-beta-D-Man-(1-&gt;4)-beta-D-GlcNAc-(1-&gt;4)-alpha-D-GlcNAc-diphospho-di-trans,poly-cis-dolichol + a di-trans,poly-cis-dolichyl beta-D-mannosyl phosphate = an alpha-D-Man-(1-&gt;2)-alpha-D-Man-(1-&gt;2)-alpha-D-Man-(1-&gt;3)-[alpha-D-Man-(1-&gt;2)-alpha-D-Man-(1-&gt;3)-[alpha-D-Man-(1-&gt;6)]-alpha-D-Man-(1-&gt;6)]-beta-D-Man-(1-&gt;4)-beta-D-GlcNAc-(1-&gt;4)-alpha-D-GlcNAc-diphospho-di-trans,poly-cis-dolichol + a di-trans,poly-cis-dolichyl phosphate + H(+). Its pathway is protein modification; protein glycosylation. In terms of biological role, mannosyltransferase that operates in the biosynthetic pathway of dolichol-linked oligosaccharides, the glycan precursors employed in protein asparagine (N)-glycosylation. The assembly of dolichol-linked oligosaccharides begins on the cytosolic side of the endoplasmic reticulum membrane and finishes in its lumen. The sequential addition of sugars to dolichol pyrophosphate produces dolichol-linked oligosaccharides containing fourteen sugars, including two GlcNAcs, nine mannoses and three glucoses. Once assembled, the oligosaccharide is transferred from the lipid to nascent proteins by oligosaccharyltransferases. In the lumen of the endoplasmic reticulum, adds the eighth mannose residue in an alpha-1,6 linkage onto Man(7)GlcNAc(2)-PP-dolichol to produce Man(8)GlcNAc(2)-PP-dolichol. This Drosophila melanogaster (Fruit fly) protein is Dol-P-Man:Man(7)GlcNAc(2)-PP-Dol alpha-1,6-mannosyltransferase.